The sequence spans 182 residues: uncharacterized protein (182 aa).

An N-terminal signal peptide occupies residues 1 to 26 (MIRALCTIVLIAAGVAVALYLSLVYG). The disordered stretch occupies residues 68–90 (YTERPYPVSSTQSPTTTQSPTTT). Residues 74–90 (PVSSTQSPTTTQSPTTT) show a composition bias toward low complexity.

This is an uncharacterized protein from Dryophytes versicolor (chameleon treefrog).